We begin with the raw amino-acid sequence, 231 residues long: GTP cyclohydrolase III (231 aa).

It belongs to the archaeal-type GTP cyclohydrolase family.

The catalysed reaction is GTP + 3 H2O = 2-amino-5-formylamino-6-(5-phospho-D-ribosylamino)pyrimidin-4(3H)-one + 2 phosphate + 2 H(+). Catalyzes the formation of 2-amino-5-formylamino-6-ribofuranosylamino-4(3H)-pyrimidinone ribonucleotide monophosphate and inorganic phosphate from GTP. Also has an independent pyrophosphate phosphohydrolase activity. This is GTP cyclohydrolase III from Saccharolobus solfataricus (strain ATCC 35092 / DSM 1617 / JCM 11322 / P2) (Sulfolobus solfataricus).